The chain runs to 648 residues: Threonine--tRNA ligase (648 aa).

Positions 1–63 constitute a TGS domain; sequence MTEINIEFPD…NENVKIEIVT (63 aa). The tract at residues 243–541 is catalytic; it reads DHRVIGNNLD…LIEMYKGAFP (299 aa). Residues cysteine 337, histidine 388, and histidine 518 each contribute to the Zn(2+) site.

The protein belongs to the class-II aminoacyl-tRNA synthetase family. In terms of assembly, homodimer. The cofactor is Zn(2+).

Its subcellular location is the cytoplasm. The enzyme catalyses tRNA(Thr) + L-threonine + ATP = L-threonyl-tRNA(Thr) + AMP + diphosphate + H(+). Its function is as follows. Catalyzes the attachment of threonine to tRNA(Thr) in a two-step reaction: L-threonine is first activated by ATP to form Thr-AMP and then transferred to the acceptor end of tRNA(Thr). Also edits incorrectly charged L-seryl-tRNA(Thr). This Pediococcus pentosaceus (strain ATCC 25745 / CCUG 21536 / LMG 10740 / 183-1w) protein is Threonine--tRNA ligase.